The primary structure comprises 680 residues: DNA-directed RNA polymerase subunit beta' (680 aa).

Zn(2+) is bound by residues Cys-69, Cys-71, Cys-87, and Cys-90. Residues Asp-489, Asp-491, and Asp-493 each contribute to the Mg(2+) site.

It belongs to the RNA polymerase beta' chain family. RpoC1 subfamily. As to quaternary structure, in plastids the minimal PEP RNA polymerase catalytic core is composed of four subunits: alpha, beta, beta', and beta''. When a (nuclear-encoded) sigma factor is associated with the core the holoenzyme is formed, which can initiate transcription. The cofactor is Mg(2+). It depends on Zn(2+) as a cofactor.

The protein resides in the plastid. Its subcellular location is the chloroplast. The catalysed reaction is RNA(n) + a ribonucleoside 5'-triphosphate = RNA(n+1) + diphosphate. DNA-dependent RNA polymerase catalyzes the transcription of DNA into RNA using the four ribonucleoside triphosphates as substrates. The polypeptide is DNA-directed RNA polymerase subunit beta' (Citrus sinensis (Sweet orange)).